We begin with the raw amino-acid sequence, 299 residues long: Probable 4-deoxy-4-formamido-L-arabinose-phosphoundecaprenol deformylase ArnD (299 aa).

Residues 2–263 enclose the NodB homology domain; sequence IDVGLRIDVD…EASARGIRFV (262 aa).

The protein belongs to the polysaccharide deacetylase family. ArnD deformylase subfamily.

The enzyme catalyses 4-deoxy-4-formamido-alpha-L-arabinopyranosyl di-trans,octa-cis-undecaprenyl phosphate + H2O = 4-amino-4-deoxy-alpha-L-arabinopyranosyl di-trans,octa-cis-undecaprenyl phosphate + formate. It participates in glycolipid biosynthesis; 4-amino-4-deoxy-alpha-L-arabinose undecaprenyl phosphate biosynthesis; 4-amino-4-deoxy-alpha-L-arabinose undecaprenyl phosphate from UDP-4-deoxy-4-formamido-beta-L-arabinose and undecaprenyl phosphate: step 2/2. Its pathway is bacterial outer membrane biogenesis; lipopolysaccharide biosynthesis. Catalyzes the deformylation of 4-deoxy-4-formamido-L-arabinose-phosphoundecaprenol to 4-amino-4-deoxy-L-arabinose-phosphoundecaprenol. The modified arabinose is attached to lipid A and is required for resistance to polymyxin and cationic antimicrobial peptides. This chain is Probable 4-deoxy-4-formamido-L-arabinose-phosphoundecaprenol deformylase ArnD, found in Aeromonas salmonicida (strain A449).